The following is a 198-amino-acid chain: Acyl carrier protein phosphodiesterase (198 aa).

Belongs to the AcpH family.

It carries out the reaction holo-[ACP] + H2O = apo-[ACP] + (R)-4'-phosphopantetheine + H(+). Converts holo-ACP to apo-ACP by hydrolytic cleavage of the phosphopantetheine prosthetic group from ACP. The sequence is that of Acyl carrier protein phosphodiesterase from Photorhabdus laumondii subsp. laumondii (strain DSM 15139 / CIP 105565 / TT01) (Photorhabdus luminescens subsp. laumondii).